The sequence spans 511 residues: V-type proton ATPase subunit B, brain isoform (511 aa).

R400 is an ATP binding site.

This sequence belongs to the ATPase alpha/beta chains family. As to quaternary structure, V-ATPase is a heteromultimeric enzyme made up of two complexes: the ATP-hydrolytic V1 complex and the proton translocation V0 complex. The V1 complex consists of three catalytic AB heterodimers that form a heterohexamer, three peripheral stalks each consisting of EG heterodimers, one central rotor including subunits D and F, and the regulatory subunits C and H. The proton translocation complex V0 consists of the proton transport subunit a, a ring of proteolipid subunits c9c'', rotary subunit d, subunits e and f, and the accessory subunits ATP6AP1/Ac45 and ATP6AP2/PRR. Kidney; localizes to early distal nephron, encompassing thick ascending limbs and distal convoluted tubules (at protein level).

Its subcellular location is the apical cell membrane. It is found in the melanosome. The protein localises to the cytoplasm. The protein resides in the cytoplasmic vesicle. It localises to the secretory vesicle. Its subcellular location is the synaptic vesicle membrane. It is found in the clathrin-coated vesicle membrane. Non-catalytic subunit of the V1 complex of vacuolar(H+)-ATPase (V-ATPase), a multisubunit enzyme composed of a peripheral complex (V1) that hydrolyzes ATP and a membrane integral complex (V0) that translocates protons. V-ATPase is responsible for acidifying and maintaining the pH of intracellular compartments and in some cell types, is targeted to the plasma membrane, where it is responsible for acidifying the extracellular environment. In renal intercalated cells, can partially compensate the lack of ATP6V1B1 and mediate secretion of protons (H+) into the urine under base-line conditions but not in conditions of acid load. This Homo sapiens (Human) protein is V-type proton ATPase subunit B, brain isoform (ATP6V1B2).